A 725-amino-acid chain; its full sequence is Protein ECM27 (725 aa).

The next 12 helical transmembrane spans lie at 21-41, 119-139, 157-177, 178-198, 397-417, 439-459, 470-490, 526-546, 559-579, 621-641, 668-688, and 704-724; these read VTFIVPSLFHIIIAFVLLGIC, VLGACGIILCIVEGSIFIIMS, LLFSLAAMCVMSYVSLMNQVT, VLNCLLMAFLYAFYLVVKLTF, ISDAIFSIITVPFFIIFKLSC, LPIILLFIQSITAPFLLCSIL, LVYLFPLILAMALILLLTAFI, IQIIFLAIGIINIIIWISLLA, ILGLSKAILGLTIFAWGNSVG, LNSMGGIGFSGLVSMLFIGAF, FIVSCVFIILQIILLLLFFGG, and GISMCGLWALATLINILLELF.

The protein belongs to the Ca(2+):cation antiporter (CaCA) (TC 2.A.19) family.

The protein resides in the membrane. This chain is Protein ECM27 (ECM27), found in Saccharomyces cerevisiae (strain ATCC 204508 / S288c) (Baker's yeast).